Here is an 860-residue protein sequence, read N- to C-terminus: Leucine--tRNA ligase (860 aa).

The 'HIGH' region signature appears at 42–52 (PYPSGRLHMGH). The 'KMSKS' region signature appears at 619–623 (KMSKS). Lys-622 contacts ATP.

The protein belongs to the class-I aminoacyl-tRNA synthetase family.

It localises to the cytoplasm. It catalyses the reaction tRNA(Leu) + L-leucine + ATP = L-leucyl-tRNA(Leu) + AMP + diphosphate. The sequence is that of Leucine--tRNA ligase from Yersinia pseudotuberculosis serotype O:3 (strain YPIII).